A 548-amino-acid chain; its full sequence is Chaperonin GroEL (548 aa).

Residues 30-33 (TLGP), lysine 51, 87-91 (DGTTT), glycine 415, 479-481 (NAA), and aspartate 495 each bind ATP.

The protein belongs to the chaperonin (HSP60) family. In terms of assembly, forms a cylinder of 14 subunits composed of two heptameric rings stacked back-to-back. Interacts with the co-chaperonin GroES.

The protein resides in the cytoplasm. The catalysed reaction is ATP + H2O + a folded polypeptide = ADP + phosphate + an unfolded polypeptide.. Functionally, together with its co-chaperonin GroES, plays an essential role in assisting protein folding. The GroEL-GroES system forms a nano-cage that allows encapsulation of the non-native substrate proteins and provides a physical environment optimized to promote and accelerate protein folding. The polypeptide is Chaperonin GroEL (Ectopseudomonas mendocina (strain ymp) (Pseudomonas mendocina)).